A 250-amino-acid polypeptide reads, in one-letter code: UPF0736 protein BPUM_1067 (250 aa).

Belongs to the UPF0736 family.

This chain is UPF0736 protein BPUM_1067, found in Bacillus pumilus (strain SAFR-032).